Consider the following 101-residue polypeptide: Citrate lyase acyl carrier protein (101 aa).

Ser14 is subject to O-(phosphoribosyl dephospho-coenzyme A)serine.

Belongs to the CitD family. Oligomer with a subunit composition of (alpha,beta,gamma)6.

The protein localises to the cytoplasm. Covalent carrier of the coenzyme of citrate lyase. The chain is Citrate lyase acyl carrier protein from Latilactobacillus sakei subsp. sakei (strain 23K) (Lactobacillus sakei subsp. sakei).